Reading from the N-terminus, the 321-residue chain is Lipoyl synthase (321 aa).

The [4Fe-4S] cluster site is built by Cys68, Cys73, Cys79, Cys94, Cys98, Cys101, and Ser308. Residues 80 to 297 (FNHGTATFMI…KEEAMAMGFT (218 aa)) enclose the Radical SAM core domain.

This sequence belongs to the radical SAM superfamily. Lipoyl synthase family. The cofactor is [4Fe-4S] cluster.

It is found in the cytoplasm. It catalyses the reaction [[Fe-S] cluster scaffold protein carrying a second [4Fe-4S](2+) cluster] + N(6)-octanoyl-L-lysyl-[protein] + 2 oxidized [2Fe-2S]-[ferredoxin] + 2 S-adenosyl-L-methionine + 4 H(+) = [[Fe-S] cluster scaffold protein] + N(6)-[(R)-dihydrolipoyl]-L-lysyl-[protein] + 4 Fe(3+) + 2 hydrogen sulfide + 2 5'-deoxyadenosine + 2 L-methionine + 2 reduced [2Fe-2S]-[ferredoxin]. It participates in protein modification; protein lipoylation via endogenous pathway; protein N(6)-(lipoyl)lysine from octanoyl-[acyl-carrier-protein]: step 2/2. In terms of biological role, catalyzes the radical-mediated insertion of two sulfur atoms into the C-6 and C-8 positions of the octanoyl moiety bound to the lipoyl domains of lipoate-dependent enzymes, thereby converting the octanoylated domains into lipoylated derivatives. In Serratia proteamaculans (strain 568), this protein is Lipoyl synthase.